The primary structure comprises 158 residues: Transcriptional repressor NrdR (158 aa).

A disordered region spans residues 1 to 22 (MRCPYCGSEDTQVKDSRPAEDN). The segment at 3 to 34 (CPYCGSEDTQVKDSRPAEDNTSIRRRRICPDC) is a zinc-finger region. Over residues 11-22 (TQVKDSRPAEDN) the composition is skewed to basic and acidic residues. Residues 49–139 (LMVIKKTGRK…VYRDFSLAED (91 aa)) form the ATP-cone domain.

The protein belongs to the NrdR family. Zn(2+) serves as cofactor.

In terms of biological role, negatively regulates transcription of bacterial ribonucleotide reductase nrd genes and operons by binding to NrdR-boxes. The chain is Transcriptional repressor NrdR from Rhizobium etli (strain CIAT 652).